We begin with the raw amino-acid sequence, 148 residues long: 3-dehydroquinate dehydratase (148 aa).

The Proton acceptor role is filled by Y23. N74, H80, and D87 together coordinate substrate. Residue H100 is the Proton donor of the active site. Residues 101-102 (IS) and R111 contribute to the substrate site.

The protein belongs to the type-II 3-dehydroquinase family. Homododecamer.

It catalyses the reaction 3-dehydroquinate = 3-dehydroshikimate + H2O. It functions in the pathway metabolic intermediate biosynthesis; chorismate biosynthesis; chorismate from D-erythrose 4-phosphate and phosphoenolpyruvate: step 3/7. Functionally, catalyzes a trans-dehydration via an enolate intermediate. The polypeptide is 3-dehydroquinate dehydratase (Anoxybacillus flavithermus (strain DSM 21510 / WK1)).